The primary structure comprises 426 residues: Enolase (426 aa).

Position 163 (Gln163) interacts with (2R)-2-phosphoglycerate. Residue Glu205 is the Proton donor of the active site. 3 residues coordinate Mg(2+): Asp242, Glu286, and Asp313. (2R)-2-phosphoglycerate is bound by residues Lys338, Arg367, Ser368, and Lys389. Lys338 (proton acceptor) is an active-site residue.

This sequence belongs to the enolase family. The cofactor is Mg(2+).

It is found in the cytoplasm. Its subcellular location is the secreted. It localises to the cell surface. The enzyme catalyses (2R)-2-phosphoglycerate = phosphoenolpyruvate + H2O. The protein operates within carbohydrate degradation; glycolysis; pyruvate from D-glyceraldehyde 3-phosphate: step 4/5. Catalyzes the reversible conversion of 2-phosphoglycerate (2-PG) into phosphoenolpyruvate (PEP). It is essential for the degradation of carbohydrates via glycolysis. The chain is Enolase from Helicobacter pylori (strain Shi470).